A 314-amino-acid chain; its full sequence is Diisopropyl-fluorophosphatase (314 aa).

Ca(2+) is bound by residues glutamate 21, asparagine 120, asparagine 175, aspartate 229, aspartate 232, leucine 273, and histidine 274. The active-site Proton acceptor is histidine 287.

In terms of assembly, monomer. Requires Ca(2+) as cofactor.

The enzyme catalyses diisopropyl fluorophosphate + H2O = diisopropyl phosphate + fluoride + 2 H(+). Its activity is regulated as follows. Inhibited by chelating agents. In terms of biological role, biological function and substrate unknown. However, it is capable of acting on phosphorus anhydride bonds (such as phosphorus-halide and phosphorus-cyanide) in organophosphorus compounds (including nerve gases). This is Diisopropyl-fluorophosphatase from Loligo vulgaris (Common European squid).